A 254-amino-acid chain; its full sequence is Tabinhibitin 6 (254 aa).

A signal peptide spans 1–22 (MLPYWCPLLLAALVLQYATIDA). The Cell attachment site motif lies at 31 to 33 (RGD). The SCP domain maps to 66–210 (LSKINDVRDH…KARALLTCNF (145 aa)).

The protein belongs to the CRISP family. Expressed in salivary glands.

The protein localises to the secreted. Functionally, inhibits platelet aggregation induced by all agonists tested (ADP, arachidonic acid, the thromboxane A2 analog U46619, thrombin, and snake venom snaclecs (TMVA that activates platelet through GPIB, and stejnulxin that specifically acts through GPVI (GP6))). May act by competing with fibrinogen for binding to glycoprotein IIb/IIIa (ITGA2B/ITGB3). The sequence is that of Tabinhibitin 6 from Tabanus yao (Horsefly).